The following is a 196-amino-acid chain: Putative 3-methyladenine DNA glycosylase (196 aa).

It belongs to the DNA glycosylase MPG family.

This Chlorobium luteolum (strain DSM 273 / BCRC 81028 / 2530) (Pelodictyon luteolum) protein is Putative 3-methyladenine DNA glycosylase.